Consider the following 216-residue polypeptide: Adenylate kinase (216 aa).

10-15 serves as a coordination point for ATP; the sequence is GAGKGT. Residues 30–59 are NMP; it reads STGDMFRAAMKAETEMGLQAKSFIDKGALV. Residues threonine 31, arginine 36, 57 to 59, 85 to 88, and glutamine 92 contribute to the AMP site; these read ALV and GFPR. Residues 126-163 form an LID region; the sequence is GRRICKECGATYHLEFNPPAKADVCDKCGGELYQRSDD. Arginine 127 lines the ATP pocket. Zn(2+) contacts are provided by cysteine 130 and cysteine 133. Position 136–137 (136–137) interacts with ATP; it reads TY. Zn(2+) contacts are provided by cysteine 150 and cysteine 153. Residues arginine 160 and arginine 171 each contribute to the AMP site. ATP is bound at residue glutamine 199.

This sequence belongs to the adenylate kinase family. Monomer.

It localises to the cytoplasm. The catalysed reaction is AMP + ATP = 2 ADP. Its pathway is purine metabolism; AMP biosynthesis via salvage pathway; AMP from ADP: step 1/1. Functionally, catalyzes the reversible transfer of the terminal phosphate group between ATP and AMP. Plays an important role in cellular energy homeostasis and in adenine nucleotide metabolism. The protein is Adenylate kinase of Bacillus cereus (strain ATCC 10987 / NRS 248).